We begin with the raw amino-acid sequence, 40 residues long: Photosystem II reaction center protein J (40 aa).

Residues 8–28 traverse the membrane as a helical segment; it reads IPLWIIGTVTGIPVIGLIGIF.

The protein belongs to the PsbJ family. As to quaternary structure, PSII is composed of 1 copy each of membrane proteins PsbA, PsbB, PsbC, PsbD, PsbE, PsbF, PsbH, PsbI, PsbJ, PsbK, PsbL, PsbM, PsbT, PsbX, PsbY, PsbZ, Psb30/Ycf12, at least 3 peripheral proteins of the oxygen-evolving complex and a large number of cofactors. It forms dimeric complexes.

Its subcellular location is the plastid. The protein localises to the chloroplast thylakoid membrane. In terms of biological role, one of the components of the core complex of photosystem II (PSII). PSII is a light-driven water:plastoquinone oxidoreductase that uses light energy to abstract electrons from H(2)O, generating O(2) and a proton gradient subsequently used for ATP formation. It consists of a core antenna complex that captures photons, and an electron transfer chain that converts photonic excitation into a charge separation. The chain is Photosystem II reaction center protein J from Citrus sinensis (Sweet orange).